A 431-amino-acid polypeptide reads, in one-letter code: Glutamyl-tRNA reductase (431 aa).

Substrate-binding positions include 49–52 (TCNR), S109, 114–116 (EGQ), and Q120. The active-site Nucleophile is the C50. 189–194 (GAGKMA) contacts NADP(+).

It belongs to the glutamyl-tRNA reductase family. In terms of assembly, homodimer.

The enzyme catalyses (S)-4-amino-5-oxopentanoate + tRNA(Glu) + NADP(+) = L-glutamyl-tRNA(Glu) + NADPH + H(+). It functions in the pathway porphyrin-containing compound metabolism; protoporphyrin-IX biosynthesis; 5-aminolevulinate from L-glutamyl-tRNA(Glu): step 1/2. Its pathway is porphyrin-containing compound metabolism; chlorophyll biosynthesis. In terms of biological role, catalyzes the NADPH-dependent reduction of glutamyl-tRNA(Glu) to glutamate 1-semialdehyde (GSA). The sequence is that of Glutamyl-tRNA reductase from Synechococcus sp. (strain JA-3-3Ab) (Cyanobacteria bacterium Yellowstone A-Prime).